The chain runs to 222 residues: Cytidylate kinase (222 aa).

10–18 (GPSASGKGT) contacts ATP.

This sequence belongs to the cytidylate kinase family. Type 1 subfamily.

Its subcellular location is the cytoplasm. The enzyme catalyses CMP + ATP = CDP + ADP. It carries out the reaction dCMP + ATP = dCDP + ADP. The sequence is that of Cytidylate kinase from Chromobacterium violaceum (strain ATCC 12472 / DSM 30191 / JCM 1249 / CCUG 213 / NBRC 12614 / NCIMB 9131 / NCTC 9757 / MK).